The following is a 383-amino-acid chain: L-aspartate/L-glutamate decarboxylase (383 aa).

Lysine 232 carries the N6-(pyridoxal phosphate)lysine modification.

The protein belongs to the group II decarboxylase family. MfnA subfamily. Monomer. Pyridoxal 5'-phosphate serves as cofactor.

It carries out the reaction L-aspartate + H(+) = beta-alanine + CO2. It catalyses the reaction L-glutamate + H(+) = 4-aminobutanoate + CO2. The enzyme catalyses L-cysteate + H(+) = taurine + CO2. The catalysed reaction is 3-sulfino-L-alanine + H(+) = hypotaurine + CO2. It participates in cofactor biosynthesis; coenzyme A biosynthesis. Its function is as follows. Catalyzes the decarboxylation of L-aspartate to produce beta-alanine, and the decarboxylation of L-glutamate to produce 4-aminobutanoate. Can also use cysteate and, to a lesser extent, cysteine sulfite (3-sulfino-L-alanine), but not L-tyrosine. Specific activities toward L-aspartate and cysteate are higher than toward L-glutamate. The polypeptide is L-aspartate/L-glutamate decarboxylase (Pyrococcus horikoshii (strain ATCC 700860 / DSM 12428 / JCM 9974 / NBRC 100139 / OT-3)).